Here is a 276-residue protein sequence, read N- to C-terminus: Urease accessory protein UreD (276 aa).

Belongs to the UreD family. UreD, UreF and UreG form a complex that acts as a GTP-hydrolysis-dependent molecular chaperone, activating the urease apoprotein by helping to assemble the nickel containing metallocenter of UreC. The UreE protein probably delivers the nickel.

It is found in the cytoplasm. Functionally, required for maturation of urease via the functional incorporation of the urease nickel metallocenter. This chain is Urease accessory protein UreD, found in Albidiferax ferrireducens (strain ATCC BAA-621 / DSM 15236 / T118) (Rhodoferax ferrireducens).